The chain runs to 491 residues: Tryptophan 5-hydroxylase 2 (491 aa).

Ser19 is modified (phosphoserine). The segment at 33-63 is disordered; the sequence is NLTVNKSNSGKNDDKKGNKGSSRSETAPDSG. Residues 66-141 form the ACT domain; it reads AVVFSLRNEV…TIVTLNPPEN (76 aa). The Fe cation site is built by His319, His324, and Glu364.

This sequence belongs to the biopterin-dependent aromatic amino acid hydroxylase family. In terms of assembly, interacts with DNAJC12. It depends on Fe(2+) as a cofactor.

The catalysed reaction is (6R)-L-erythro-5,6,7,8-tetrahydrobiopterin + L-tryptophan + O2 = 5-hydroxy-L-tryptophan + (4aS,6R)-4a-hydroxy-L-erythro-5,6,7,8-tetrahydrobiopterin. Its pathway is aromatic compound metabolism; serotonin biosynthesis; serotonin from L-tryptophan: step 1/2. This Equus caballus (Horse) protein is Tryptophan 5-hydroxylase 2 (TPH2).